The primary structure comprises 226 residues: Putative ABC transporter ATP-binding protein BQ02700 (226 aa).

The region spanning Ile-4–Met-225 is the ABC transporter domain. Gly-35–Ser-42 is an ATP binding site.

Belongs to the ABC transporter superfamily.

Its subcellular location is the cell inner membrane. In terms of biological role, probably part of an ABC transporter complex. Responsible for energy coupling to the transport system. The sequence is that of Putative ABC transporter ATP-binding protein BQ02700 from Bartonella quintana (strain Toulouse) (Rochalimaea quintana).